Reading from the N-terminus, the 546-residue chain is Chaperonin GroEL (546 aa).

Residues Thr-30–Pro-33, Lys-51, Asp-87–Thr-91, Gly-415, Asn-479–Ala-481, and Asp-495 contribute to the ATP site. Residues Lys-526–Met-546 form a disordered region. The span at Ala-533–Met-546 shows a compositional bias: gly residues.

The protein belongs to the chaperonin (HSP60) family. Forms a cylinder of 14 subunits composed of two heptameric rings stacked back-to-back. Interacts with the co-chaperonin GroES.

The protein localises to the cytoplasm. The catalysed reaction is ATP + H2O + a folded polypeptide = ADP + phosphate + an unfolded polypeptide.. In terms of biological role, together with its co-chaperonin GroES, plays an essential role in assisting protein folding. The GroEL-GroES system forms a nano-cage that allows encapsulation of the non-native substrate proteins and provides a physical environment optimized to promote and accelerate protein folding. This Thioalkalivibrio sulfidiphilus (strain HL-EbGR7) protein is Chaperonin GroEL.